A 118-amino-acid chain; its full sequence is Holo-[acyl-carrier-protein] synthase (118 aa).

Positions 8 and 58 each coordinate Mg(2+).

This sequence belongs to the P-Pant transferase superfamily. AcpS family. It depends on Mg(2+) as a cofactor.

The protein resides in the cytoplasm. The catalysed reaction is apo-[ACP] + CoA = holo-[ACP] + adenosine 3',5'-bisphosphate + H(+). In terms of biological role, transfers the 4'-phosphopantetheine moiety from coenzyme A to a Ser of acyl-carrier-protein. This is Holo-[acyl-carrier-protein] synthase from Listeria innocua serovar 6a (strain ATCC BAA-680 / CLIP 11262).